Here is a 598-residue protein sequence, read N- to C-terminus: MGIPADNLQSRAKASFDTRVAAAELALNRGVVPSFANGEELLYRNPDPDNTDPSFIASFTKGLPHDDNGAIIDPDDFLAFVRAINSGDEKEIADLTLGPARDPETGLPIWRSDLANSLELEVRGWENSSAGLTFDLEGPDAQSIAMPPAPVLTSPELVAEIAELYLMALGREIEFSEFDSPKNAEYIQFAIDQLNGLEWFNTPAKLGDPPAEIRRRRGEVTVGNLFRGILPGSEVGPYLSQYIIVGSKQIGSATVGNKTLVSPNAADEFDGEIAYGSITISQRVRIATPGRDFMTDLKVFLDVQDAADFRGFESYEPGARLIRTIRDLATWVHFDALYEAYLNACLILLANGVPFDPNLPFQQEDKLDNQDVFVNFGSAHVLSLVTEVATRALKAVRYQKFNIHRRLRPEATGGLISVNKIAPQKGESIFPEVDLAVEELGDILEKAEISNRKQNIADGDPDPDPSFLLPMAFAEGSPFHPSYGSGHAVVAGACVTILKAFFDSGIEIDQVFEVDKDEDKLVKSSFKGTLTVAGELNKLADNIAIGRNMAGVHYFSDQFESLLLGEQVAIGILEEQSLTYGENFFFNLPKFDGTTIQI.

Phe361, Gln363, Asp365, Asp368, and Gln370 together coordinate Ca(2+). The vanadate site is built by Lys400 and Arg408. Residue His480 is part of the active site. Ser485, Gly486, His487, Arg547, and His553 together coordinate vanadate. His487 is a catalytic residue.

Belongs to the vanadium-dependent haloperoxidase family. As to quaternary structure, homododecamer. The cofactor is Ca(2+). Vanadate is required as a cofactor.

The enzyme catalyses RH + Br(-) + H2O2 = RBr + 2 H2O.. In terms of biological role, catalyzes the halogenation of organic substrates in the presence of hydrogen peroxide. This Corallina pilulifera (Red coralline alga) protein is Vanadium-dependent bromoperoxidase.